The chain runs to 405 residues: uncharacterized protein (405 aa).

The next 13 membrane-spanning stretches (helical) occupy residues 19–39 (IVSIVMFNFASYLTIGLPLAV), 48–68 (MGFSAFWAGLIISLQYFATLL), 85–105 (IVVFGLCGCFLSGFGYLLADI), 106–126 (ASAWPMISLLLLGLGRVILGI), 129–149 (SFAGTGSTLWGVGVVGSLHIG), 156–176 (GIVTYGAMAMGAPLGVLCYAW), 178–198 (GLQGLALTVMGVALLAILLAL), 224–244 (GMALALASAGFGVIATFITLF), 252–272 (GAAFALTLFSVAFVGTRLLFP), 283–303 (VAMICFGVEIIGLLLVGTAAM), 309–329 (IGVLLTGMGFSLVFPALGVVA), 344–364 (TYTVFMDMSLGVTGPLAGLVM), and 366–386 (WAGVPVIYLAAAGLVAMALLL).

Belongs to the major facilitator superfamily. YhhS family.

It localises to the cell inner membrane. This is an uncharacterized protein from Salmonella paratyphi C (strain RKS4594).